The sequence spans 347 residues: NADH-ubiquinone oxidoreductase chain 2 (347 aa).

The next 11 membrane-spanning stretches (helical) occupy residues 1-21 (MNPLIFSTILATIIMGTAIVM), 25-45 (HWLTIWIGFEMNMLAIIPMLM), 59-79 (YFLTQATASMLLMLAVIMNLT), 96-116 (IIMTIALTMKLGLSPFHFWVP), 127-147 (CLILLTWQKLAPLSILYMISP), 149-169 (INLNLLLSMSLISVAIGGWGG), 178-198 (IMAYSSIAHMGWMTAILAYNP), 200-220 (MTMLNLLVYITMTTTMFMLLI), 247-267 (IMLSLGGLPPLTGFLPKWMII), 276-296 (IIMPTLMAIMALLSLYFYMRL), and 325-345 (LLSPLIVMSTLTLPLAPMMSL).

This sequence belongs to the complex I subunit 2 family. In terms of assembly, core subunit of respiratory chain NADH dehydrogenase (Complex I) which is composed of 45 different subunits. Interacts with TMEM242.

It localises to the mitochondrion inner membrane. It catalyses the reaction a ubiquinone + NADH + 5 H(+)(in) = a ubiquinol + NAD(+) + 4 H(+)(out). Core subunit of the mitochondrial membrane respiratory chain NADH dehydrogenase (Complex I) which catalyzes electron transfer from NADH through the respiratory chain, using ubiquinone as an electron acceptor. Essential for the catalytic activity and assembly of complex I. In Natalus stramineus (Mexican funnel-eared bat), this protein is NADH-ubiquinone oxidoreductase chain 2.